A 73-amino-acid chain; its full sequence is Large ribosomal subunit protein uL29 (73 aa).

The interval Met-1–Asp-20 is disordered.

This sequence belongs to the universal ribosomal protein uL29 family.

The sequence is that of Large ribosomal subunit protein uL29 from Protochlamydia amoebophila (strain UWE25).